The chain runs to 247 residues: tRNA (guanine-N(1)-)-methyltransferase (247 aa).

S-adenosyl-L-methionine-binding positions include G115 and I134–L139.

This sequence belongs to the RNA methyltransferase TrmD family. As to quaternary structure, homodimer.

It localises to the cytoplasm. It carries out the reaction guanosine(37) in tRNA + S-adenosyl-L-methionine = N(1)-methylguanosine(37) in tRNA + S-adenosyl-L-homocysteine + H(+). In terms of biological role, specifically methylates guanosine-37 in various tRNAs. The polypeptide is tRNA (guanine-N(1)-)-methyltransferase (Anaeromyxobacter dehalogenans (strain 2CP-C)).